Reading from the N-terminus, the 1495-residue chain is MSLLWVFYQNNVQKLNLSNLPSSHPVTIGPDVKDSVTISTIPFNSGVISLKRKESGGQYEVFLGNDCLGTIETDISFTLQTDQQDIRLILTGSEPEKSVYFTGNRDEIVCSSEKTNADIYLNPQDFAFAEQSTFSLLRAGGSWSVRPESGTIFLNGEKINANTPLKPGDEIFWNFTQMRVTEQDLLEIVHYAQFETALTETVKPSTEMQKKYPQYRRTPRMVYDLPDDRVSFSFPSQESDQTNRGLWLVILPPLVMLIVMGVVAIIQPRGIFILVSLAMFMMTLITSTVQYFRDKNQRKKREEKRERVYKLYLDNKRKELQALAEKQKQVLEFHFPSFEQMKYLTSEISDRIWEKSLESKDYLQLRLGTGTVPSSYEINMSGGDLANRDIDDLMEKSQHMQRVYKDIRNAPVTVDLAEGPMGLVGKSQIVKNEIHQLIGQLSFFNSYHDLRFVFIFHEEEYKDWEWMKWLPQFQMPHIYAKGFIYNEQTRDQLLSSLYELIRERDLEDDKEKLQFKPHFVFVITNQQLISEHVILEYLEGQHEHLGISTIVAAETKESLSENITTLVRYINEHEGDILIQKKKAVRIPFRLDHHQREDNERFSRTLRTLNHQVGITNSIPETVSFLELFHAKEVKEIGIQQRWLTSESSKSLSVPIGYKGKDDIVYLNLHEKAHGPHGLLAGTTGSGKSEFLQTYILSLAVHFHPHEAAFLLIDYKGGGMAQPFRNIPHLLGTITNIEGSKNFSMRALASIKSELKKRQRLFDQYQVNHINDYTKLYKQGKAEVAMPHLFLISDEFAELKSEEPDFIRELVSAARIGRSLGVHLILATQKPGGIIDDQIWSNSRFKVALKVQDATDSKEILKNSDAANITVTGRGYLQVGNNEVYELFQSAWSGAPYLEEVYGTEDEIAIVTDTGLIPLSEVDTEDNAKKDVQTEIEAVVDEIERIQDEMGIEKLPSPWLPPLAERIPRTLFPSNEKDHFHFAYVDEPDLQRQAPIAYKMMEDGNIGIFGSSGYGKSIAAATFLMSFADVYTPEELHVYIFDFGNGTLLPLAKLPHTADYFLMDQSRKIEKFMIRIKEEIDRRKRLFREKEISHIKMYNALSEEELPFIFITIDNFDIVKDEMHELESEFVQLSRDGQSLGIYFMLTATRVNAVRQSLLNNLKTKIVHYLMDQSEGYSIYGRPKFNLEPIPGRVIIQKEELYFAQMFLPVDADDDIGMFNELKSDVQKLQGRFASMEQPAPIPMLPESLSTRELSIRFKLERKPLSVPIGLHEETVSPVYFDLGKHKHCLILGQTQRGKTNVLKVMLEHLIDDETEMIGLFDSIDRGLSHYAKESDVSYLETKEDIEQWIETAEDIFKTREAMYVEAVRQGDAQNLRFSQVVLMIDGITRFQQTIDTRIQDRLANFMKSYAHLGFSFIPGGNHSEFSKGYDSLTTEMKQIRHAILLMKKSEQNVIPLPYQRQEPEIQPGFGYVVENGKEQKVQIPLCSAERESAR.

Transmembrane regions (helical) follow at residues 246–266 (LWLVILPPLVMLIVMGVVAII) and 270–290 (GIFILVSLAMFMMTLITSTVQ). FtsK domains follow at residues 661–858 (KDDI…TDSK) and 993–1177 (QAPI…SEGY). ATP contacts are provided by residues 682 to 689 (GTTGSGKS) and 1010 to 1017 (GSSGYGKS).

This sequence belongs to the EssC family.

It localises to the cell membrane. Its function is as follows. Required for YukE secretion. Probable component or regulator of the ESX/ESAT-6-like secretion system (BsEss). This Bacillus subtilis (strain 168) protein is ESX secretion system protein YukB (yukB).